A 57-amino-acid chain; its full sequence is Large ribosomal subunit protein bL32 (57 aa).

Belongs to the bacterial ribosomal protein bL32 family.

The protein is Large ribosomal subunit protein bL32 of Mycolicibacterium gilvum (strain PYR-GCK) (Mycobacterium gilvum (strain PYR-GCK)).